A 138-amino-acid polypeptide reads, in one-letter code: Transcription antitermination protein NusB (138 aa).

Belongs to the NusB family.

Involved in transcription antitermination. Required for transcription of ribosomal RNA (rRNA) genes. Binds specifically to the boxA antiterminator sequence of the ribosomal RNA (rrn) operons. The chain is Transcription antitermination protein NusB from Tolumonas auensis (strain DSM 9187 / NBRC 110442 / TA 4).